We begin with the raw amino-acid sequence, 534 residues long: Peptide chain release factor 3 (534 aa).

A tr-type G domain is found at 9-278; the sequence is SRRRTFAIIS…FFVEHAPSPQ (270 aa). GTP is bound by residues 18–25, 86–90, and 140–143; these read SHPDAGKT, DTPGH, and NKLD.

It belongs to the TRAFAC class translation factor GTPase superfamily. Classic translation factor GTPase family. PrfC subfamily.

It localises to the cytoplasm. Its function is as follows. Increases the formation of ribosomal termination complexes and stimulates activities of RF-1 and RF-2. It binds guanine nucleotides and has strong preference for UGA stop codons. It may interact directly with the ribosome. The stimulation of RF-1 and RF-2 is significantly reduced by GTP and GDP, but not by GMP. This chain is Peptide chain release factor 3, found in Stenotrophomonas maltophilia (strain K279a).